Consider the following 122-residue polypeptide: Large ribosomal subunit protein uL14 (122 aa).

The protein belongs to the universal ribosomal protein uL14 family. Part of the 50S ribosomal subunit. Forms a cluster with proteins L3 and L19. In the 70S ribosome, L14 and L19 interact and together make contacts with the 16S rRNA in bridges B5 and B8.

Functionally, binds to 23S rRNA. Forms part of two intersubunit bridges in the 70S ribosome. The chain is Large ribosomal subunit protein uL14 from Campylobacter concisus (strain 13826).